A 330-amino-acid polypeptide reads, in one-letter code: tRNA (guanine(37)-N(1))-methyltransferase Trm5b (330 aa).

S-adenosyl-L-methionine is bound by residues Arg173, 211–212 (DI), 238–239 (DS), and Asn252.

The protein belongs to the class I-like SAM-binding methyltransferase superfamily. TRM5/TYW2 family.

Its subcellular location is the cytoplasm. The catalysed reaction is guanosine(37) in tRNA + S-adenosyl-L-methionine = N(1)-methylguanosine(37) in tRNA + S-adenosyl-L-homocysteine + H(+). Specifically methylates the N1 position of guanosine-37 in various tRNAs. This is tRNA (guanine(37)-N(1))-methyltransferase Trm5b from Pyrococcus abyssi (strain GE5 / Orsay).